The sequence spans 206 residues: Transcription factor MYB57 (206 aa).

The span at 1 to 11 (METTMKKKGRV) shows a compositional bias: basic residues. The tract at residues 1-20 (METTMKKKGRVKATITSQKE) is disordered. HTH myb-type domains lie at 22-74 (EGTV…LNYL) and 75-129 (RPDV…QRHM). DNA-binding regions (H-T-H motif) lie at residues 50 to 74 (WNSVAKASGLKRTGKSCRLRWLNYL) and 102 to 125 (WSKIAKHLPGRTDNEIKNFWRTKI). Positions 138-162 (NHQHHCSGNSQSSGMTTQGSSGKAI) are disordered. A compositionally biased stretch (low complexity) spans 144–159 (SGNSQSSGMTTQGSSG).

As to expression, expressed specifically in flowers.

Its subcellular location is the nucleus. In terms of biological role, transcription factor acting redundantly with MYB21 and MYB24 to control stamen filament elongation in the late developed flowers. Repressed at the transcript levels by DELLA proteins. In Arabidopsis thaliana (Mouse-ear cress), this protein is Transcription factor MYB57 (MYB57).